Consider the following 243-residue polypeptide: UMP-CMP kinase 1 (243 aa).

Position 29–34 (29–34 (GSGKGT)) interacts with ATP. Residues 49–78 (SAGDLLREEAKYDTEQGTMIKNLMNEGKLV) are NMP. A ribonucleoside 5'-phosphate contacts are provided by residues Arg-55, 76–78 (KLV), and 103–106 (GFPR). Asn-110 lines the CMP pocket. The tract at residues 141–149 (NRNQGRDDD) is LID. Arg-142 is an ATP binding site. Residues Arg-146 and Arg-157 each coordinate a ribonucleoside 5'-phosphate. ATP is bound at residue Arg-185.

The protein belongs to the adenylate kinase family. UMP-CMP kinase subfamily. As to quaternary structure, monomer. It depends on Mg(2+) as a cofactor.

It localises to the cytoplasm. The protein localises to the nucleus. It catalyses the reaction UMP + ATP = UDP + ADP. The enzyme catalyses CMP + ATP = CDP + ADP. It carries out the reaction dCMP + ATP = dCDP + ADP. In terms of biological role, catalyzes the phosphorylation of pyrimidine nucleoside monophosphates at the expense of ATP. Plays an important role in de novo pyrimidine nucleotide biosynthesis. Has preference for UMP and CMP as phosphate acceptors. This chain is UMP-CMP kinase 1, found in Oryza sativa subsp. japonica (Rice).